A 570-amino-acid polypeptide reads, in one-letter code: MKESPLITLVKRHSETHFANIKYGYYVLIISLVYLIGLALLRAFGRRTPSRSSSAFKNKIIYRLYDIDPAIHLGILFFAVLIPFYYHYSLTTQSTVYLKRLGRLSYALIPLNLFLTLRPNWFLRKNCTYTDFIPFHKWFSRIITVIGLLHGIFFIIKWAIDDNVSLKQKLILKTFNFVGFIISILVLFLLICSIGPMRRYNYRLFYIVHNLVNVAFILLTPIHSRPGVKFPFLLLNCTLLFIHIINRIVFAKSLMILNKNANYSKTNLVHVRLPRAILPDYFEPGSHIRISPYRRINPLYWLLPSHPYTIASLAEDNSIDLIIKETSTAEPGSQIESLRSNPKSFHLDQEKTYTLINSYPPSVPEECYSQGTNIAIICGGSGISFALPLFRHFFNKENVKYLKMIWLIKNYSEYELVLDYLKTNGLTFEKKLSNNKRISVFISGEYTAETRLDEITTNIDDENSEYEMGSFNNEDEDLSISNFNSENADSNDNTPETSHSPTKENGSLIEVKSKHSFTLSNELKSFNNESAQVNQNETWLFSCGPPSLLQLSKKYCNDERINFVCETYGL.

7 helical membrane-spanning segments follow: residues 21-41 (IKYG…LALL), 70-90 (AIHL…HYSL), 101-118 (LGRL…LTLR), 142-162 (IITV…AIDD), 177-197 (FVGF…IGPM), 204-224 (LFYI…PIHS), and 230-250 (FPFL…RIVF). Positions 101-219 (LGRLSYALIP…NLVNVAFILL (119 aa)) constitute a Ferric oxidoreductase domain. An FAD-binding FR-type domain is found at 250–388 (FAKSLMILNK…GGSGISFALP (139 aa)). Positions 481–505 (SNFNSENADSNDNTPETSHSPTKEN) are enriched in polar residues. The tract at residues 481–507 (SNFNSENADSNDNTPETSHSPTKENGS) is disordered.

Belongs to the ferric reductase (FRE) family. AIM14 subfamily. In terms of assembly, interacts with ribosomes.

It localises to the membrane. Its function is as follows. Probable cell surface metalloreductase. May be involved in iron or copper homeostasis. The chain is Probable metalloreductase AIM14 (AIM14) from Saccharomyces cerevisiae (strain YJM789) (Baker's yeast).